A 344-amino-acid polypeptide reads, in one-letter code: Dihydroorotase (344 aa).

Positions 14 and 16 each coordinate Zn(2+). Residues 16 to 18 (HLR) and Asn-42 contribute to the substrate site. 3 residues coordinate Zn(2+): Lys-99, His-136, and His-174. N6-carboxylysine is present on Lys-99. His-136 lines the substrate pocket. A substrate-binding site is contributed by Leu-219. Asp-247 serves as a coordination point for Zn(2+). Asp-247 is an active-site residue. Substrate is bound by residues His-251 and Ala-263.

It belongs to the metallo-dependent hydrolases superfamily. DHOase family. Class II DHOase subfamily. Homodimer. Zn(2+) serves as cofactor.

It carries out the reaction (S)-dihydroorotate + H2O = N-carbamoyl-L-aspartate + H(+). It participates in pyrimidine metabolism; UMP biosynthesis via de novo pathway; (S)-dihydroorotate from bicarbonate: step 3/3. Its function is as follows. Catalyzes the reversible cyclization of carbamoyl aspartate to dihydroorotate. This chain is Dihydroorotase, found in Teredinibacter turnerae (strain ATCC 39867 / T7901).